Reading from the N-terminus, the 862-residue chain is Kinesin-like protein KIN-7E (862 aa).

The Kinesin motor domain maps to 24–346; the sequence is KILVLVRLRP…LLFACCAKEV (323 aa). 110-117 is an ATP binding site; it reads GQTSSGKT. A coiled-coil region spans residues 355 to 428; the sequence is VMSDKALVKQ…RLEDFMKMVE (74 aa). Disordered regions lie at residues 463–505 and 542–632; these read RTSF…QSEE and ANGE…TPLV. Positions 465-476 are enriched in polar residues; the sequence is SFISDGTSTPLS. Positions 494-505 are enriched in basic and acidic residues; it reads MSPRHSGDQSEE. Residues 612–621 show a composition bias toward polar residues; that stretch reads DSMTSRGSDS. Residue Lys-734 forms a Glycyl lysine isopeptide (Lys-Gly) (interchain with G-Cter in ubiquitin) linkage.

It belongs to the TRAFAC class myosin-kinesin ATPase superfamily. Kinesin family. KIN-7 subfamily.

This Arabidopsis thaliana (Mouse-ear cress) protein is Kinesin-like protein KIN-7E.